We begin with the raw amino-acid sequence, 73 residues long: ATP synthase subunit 9, mitochondrial (73 aa).

The next 2 membrane-spanning stretches (helical) occupy residues 12-32 (VAALGLIGAGIGVGIVFAALI) and 50-70 (ILGFALSEATGLFALMVSFLL).

This sequence belongs to the ATPase C chain family. F-type ATPases have 2 components, CF(1) - the catalytic core - and CF(0) - the membrane proton channel. CF(1) has five subunits: alpha(3), beta(3), gamma(1), delta(1), epsilon(1). CF(0) has three main subunits: a, b and c.

It localises to the mitochondrion inner membrane. In terms of biological role, mitochondrial membrane ATP synthase (F(1)F(0) ATP synthase or Complex V) produces ATP from ADP in the presence of a proton gradient across the membrane which is generated by electron transport complexes of the respiratory chain. F-type ATPases consist of two structural domains, F(1) - containing the extramembraneous catalytic core and F(0) - containing the membrane proton channel, linked together by a central stalk and a peripheral stalk. During catalysis, ATP synthesis in the catalytic domain of F(1) is coupled via a rotary mechanism of the central stalk subunits to proton translocation. Part of the complex F(0) domain. A homomeric c-ring of probably 10 subunits is part of the complex rotary element. In Mycosarcoma maydis (Corn smut fungus), this protein is ATP synthase subunit 9, mitochondrial (ATP9).